The following is a 311-amino-acid chain: Mitochondrial FAD carrier protein FLX1 (311 aa).

3 Solcar repeats span residues 7 to 101, 123 to 210, and 224 to 310; these read TPLQ…TKEL, MNSL…LKQR, and LTNL…LKHR. 6 helical membrane-spanning segments follow: residues 13–33, 77–97, 129–149, 183–203, 230–250, and 266–286; these read VISG…LDLL, LSIN…LYGV, LSAG…IWVI, LWKG…YFAV, IEIT…FQLL, and LFPL…YKGL.

Belongs to the mitochondrial carrier (TC 2.A.29) family.

Its subcellular location is the mitochondrion inner membrane. Its function is as follows. Transport of FAD from the cytosol to the mitochondrial matrix. This chain is Mitochondrial FAD carrier protein FLX1 (FLX1), found in Saccharomyces cerevisiae (strain ATCC 204508 / S288c) (Baker's yeast).